The sequence spans 838 residues: Probable inorganic carbon transporter subunit DabA (838 aa).

Cysteine 353, aspartate 355, histidine 537, and cysteine 552 together coordinate Zn(2+).

It belongs to the inorganic carbon transporter (TC 9.A.2) DabA family. In terms of assembly, forms a complex with DabB. Zn(2+) serves as cofactor.

The protein resides in the cell membrane. Part of an energy-coupled inorganic carbon pump. This is Probable inorganic carbon transporter subunit DabA from Chloroflexus aurantiacus (strain ATCC 29366 / DSM 635 / J-10-fl).